A 304-amino-acid chain; its full sequence is Acetyl-coenzyme A carboxylase carboxyl transferase subunit beta (304 aa).

One can recognise a CoA carboxyltransferase N-terminal domain in the interval 29–298 (LWTKCVSCAA…QAYRPSPQAS (270 aa)). Residues Cys33, Cys36, Cys52, and Cys55 each coordinate Zn(2+). The C4-type zinc finger occupies 33 to 55 (CVSCAALHYTKDFQLNLCVCPAC).

The protein belongs to the AccD/PCCB family. In terms of assembly, acetyl-CoA carboxylase is a heterohexamer composed of biotin carboxyl carrier protein (AccB), biotin carboxylase (AccC) and two subunits each of ACCase subunit alpha (AccA) and ACCase subunit beta (AccD). The cofactor is Zn(2+).

It is found in the cytoplasm. It catalyses the reaction N(6)-carboxybiotinyl-L-lysyl-[protein] + acetyl-CoA = N(6)-biotinyl-L-lysyl-[protein] + malonyl-CoA. Its pathway is lipid metabolism; malonyl-CoA biosynthesis; malonyl-CoA from acetyl-CoA: step 1/1. Functionally, component of the acetyl coenzyme A carboxylase (ACC) complex. Biotin carboxylase (BC) catalyzes the carboxylation of biotin on its carrier protein (BCCP) and then the CO(2) group is transferred by the transcarboxylase to acetyl-CoA to form malonyl-CoA. The polypeptide is Acetyl-coenzyme A carboxylase carboxyl transferase subunit beta (Gloeobacter violaceus (strain ATCC 29082 / PCC 7421)).